Consider the following 349-residue polypeptide: Hydroxymethylglutaryl-CoA synthase (349 aa).

2 residues coordinate (3S)-3-hydroxy-3-methylglutaryl-CoA: aspartate 29 and alanine 30. The active-site Proton donor/acceptor is the glutamate 81. (3S)-3-hydroxy-3-methylglutaryl-CoA contacts are provided by cysteine 113 and threonine 154. The active-site Acyl-thioester intermediate is cysteine 113. CoA is bound at residue arginine 202. Positions 204 and 237 each coordinate (3S)-3-hydroxy-3-methylglutaryl-CoA. Histidine 237 (proton donor/acceptor) is an active-site residue. Lysine 242 is a binding site for CoA. Lysine 246, asparagine 269, and serine 299 together coordinate (3S)-3-hydroxy-3-methylglutaryl-CoA.

Belongs to the thiolase-like superfamily. Archaeal HMG-CoA synthase family. In terms of assembly, interacts with acetoacetyl-CoA thiolase that catalyzes the precedent step in the pathway and with a DUF35 protein. The acetoacetyl-CoA thiolase/HMG-CoA synthase complex channels the intermediate via a fused CoA-binding site, which allows for efficient coupling of the endergonic thiolase reaction with the exergonic HMGCS reaction.

It catalyses the reaction acetoacetyl-CoA + acetyl-CoA + H2O = (3S)-3-hydroxy-3-methylglutaryl-CoA + CoA + H(+). Its pathway is metabolic intermediate biosynthesis; (R)-mevalonate biosynthesis; (R)-mevalonate from acetyl-CoA: step 2/3. In terms of biological role, catalyzes the condensation of acetyl-CoA with acetoacetyl-CoA to form 3-hydroxy-3-methylglutaryl-CoA (HMG-CoA). Functions in the mevalonate (MVA) pathway leading to isopentenyl diphosphate (IPP), a key precursor for the biosynthesis of isoprenoid compounds that are building blocks of archaeal membrane lipids. The sequence is that of Hydroxymethylglutaryl-CoA synthase from Methanosarcina barkeri (strain Fusaro / DSM 804).